A 141-amino-acid chain; its full sequence is Cystatin (141 aa).

Positions 1 to 26 (MVHSQLPVAGPLRLLCALLLLPSATM) are cleaved as a signal peptide. In terms of domain architecture, Cystatin spans 29–129 (GGLSPRSVTD…CRFQVWSRPW (101 aa)). A Secondary area of contact motif is present at residues 73–77 (QVVSG). Disulfide bonds link C91–C107 and C120–C140.

The protein belongs to the cystatin family. As to expression, expressed at a low level by the venom gland (at protein level).

Its subcellular location is the secreted. Its function is as follows. Inhibits various C1 cysteine proteases including cathepsin L, papain and cathepsin B. This protein has no toxic activity and its function in the venom is unknown. It may play a role as a housekeeping or regulatory protein. The chain is Cystatin from Pseudechis porphyriacus (Red-bellied black snake).